We begin with the raw amino-acid sequence, 348 residues long: Dihydroorotase (348 aa).

2 residues coordinate Zn(2+): His17 and His19. Substrate-binding positions include 19–21 (HLR) and Asn45. Zn(2+) contacts are provided by Lys103, His140, and His178. Lys103 is modified (N6-carboxylysine). Substrate is bound at residue His140. A substrate-binding site is contributed by Leu223. Asp251 is a Zn(2+) binding site. The active site involves Asp251. 2 residues coordinate substrate: His255 and Ala267.

The protein belongs to the metallo-dependent hydrolases superfamily. DHOase family. Class II DHOase subfamily. Homodimer. Zn(2+) is required as a cofactor.

The catalysed reaction is (S)-dihydroorotate + H2O = N-carbamoyl-L-aspartate + H(+). It functions in the pathway pyrimidine metabolism; UMP biosynthesis via de novo pathway; (S)-dihydroorotate from bicarbonate: step 3/3. Functionally, catalyzes the reversible cyclization of carbamoyl aspartate to dihydroorotate. This chain is Dihydroorotase, found in Salmonella paratyphi A (strain ATCC 9150 / SARB42).